Here is a 562-residue protein sequence, read N- to C-terminus: Oxygen-dependent choline dehydrogenase (562 aa).

4-33 (DYIIIGAGSAGNVLATRLTEDPNTTVLLLE) lines the FAD pocket. The active-site Proton acceptor is the H473.

It belongs to the GMC oxidoreductase family. Requires FAD as cofactor.

It catalyses the reaction choline + A = betaine aldehyde + AH2. The catalysed reaction is betaine aldehyde + NAD(+) + H2O = glycine betaine + NADH + 2 H(+). The protein operates within amine and polyamine biosynthesis; betaine biosynthesis via choline pathway; betaine aldehyde from choline (cytochrome c reductase route): step 1/1. Functionally, involved in the biosynthesis of the osmoprotectant glycine betaine. Catalyzes the oxidation of choline to betaine aldehyde and betaine aldehyde to glycine betaine at the same rate. This Escherichia coli O45:K1 (strain S88 / ExPEC) protein is Oxygen-dependent choline dehydrogenase.